The chain runs to 343 residues: 3-hydroxy-3-methylglutaryl-CoA lyase, cytoplasmic (343 aa).

A lipid anchor (N-myristoyl glycine) is attached at G2. Residues 48–315 form the Pyruvate carboxyltransferase domain; it reads VKIVEVGPRD…NTGVDLYKVM (268 aa). R56 provides a ligand contact to substrate. 3 residues coordinate a divalent metal cation: D57, H248, and H250. Residue C281 is part of the active site. N290 contributes to the a divalent metal cation binding site.

It belongs to the HMG-CoA lyase family. A divalent metal cation serves as cofactor.

It is found in the cytoplasm. The protein localises to the cytosol. It localises to the endoplasmic reticulum membrane. The enzyme catalyses (3S)-3-hydroxy-3-methylglutaryl-CoA = acetoacetate + acetyl-CoA. It participates in metabolic intermediate metabolism; (S)-3-hydroxy-3-methylglutaryl-CoA degradation; acetoacetate from (S)-3-hydroxy-3-methylglutaryl-CoA: step 1/1. Non-mitochondrial 3-hydroxy-3-methylglutaryl-CoA lyase that catalyzes a cation-dependent cleavage of (S)-3-hydroxy-3-methylglutaryl-CoA into acetyl-CoA and acetoacetate, a key step in ketogenesis, the products of which support energy production in nonhepatic animal tissues. The protein is 3-hydroxy-3-methylglutaryl-CoA lyase, cytoplasmic (Hmgcll1) of Mus musculus (Mouse).